The chain runs to 283 residues: Pantothenate synthetase (283 aa).

Position 31–38 (31–38 (MGALHDGH)) interacts with ATP. His-38 serves as the catalytic Proton donor. Gln-62 provides a ligand contact to (R)-pantoate. Gln-62 contributes to the beta-alanine binding site. 148–151 (GKKD) provides a ligand contact to ATP. Gln-154 provides a ligand contact to (R)-pantoate. ATP contacts are provided by residues Val-177 and 185 to 188 (KSSR).

This sequence belongs to the pantothenate synthetase family. Homodimer.

It localises to the cytoplasm. The enzyme catalyses (R)-pantoate + beta-alanine + ATP = (R)-pantothenate + AMP + diphosphate + H(+). The protein operates within cofactor biosynthesis; (R)-pantothenate biosynthesis; (R)-pantothenate from (R)-pantoate and beta-alanine: step 1/1. Functionally, catalyzes the condensation of pantoate with beta-alanine in an ATP-dependent reaction via a pantoyl-adenylate intermediate. The chain is Pantothenate synthetase from Staphylococcus aureus (strain Mu3 / ATCC 700698).